Reading from the N-terminus, the 1243-residue chain is Tau-tubulin kinase 2 (1243 aa).

In terms of domain architecture, Protein kinase spans 21 to 284 (WKVLRKIGGG…LLTSVFDNSI (264 aa)). ATP-binding positions include 27–35 (IGGGGFGEI) and lysine 50. Aspartate 141 functions as the Proton acceptor in the catalytic mechanism. Serine 445 carries the phosphoserine modification. Residues 674-683 (VASTQSTSGS) show a composition bias toward polar residues. Disordered regions lie at residues 674-695 (VAST…KKDL) and 737-761 (TGHD…DPPD). Residue serine 786 is modified to Phosphoserine. Residues 1063–1086 (QINGSASPQFLPRPPPGKPPVRPG) are disordered. The segment covering 1073 to 1084 (LPRPPPGKPPVR) has biased composition (pro residues). A Phosphoserine modification is found at serine 1102. Positions 1115–1129 (QNGSQKSRSTTQCKS) are enriched in polar residues. The interval 1115–1243 (QNGSQKSRST…KSKPASKLSR (129 aa)) is disordered. Composition is skewed to low complexity over residues 1144–1170 (VVPR…PSRA), 1187–1202 (SKSP…SRRS), and 1227–1243 (SSKT…KLSR).

This sequence belongs to the protein kinase superfamily. CK1 Ser/Thr protein kinase family. In terms of assembly, interacts with CEP164. Interacts with MCRS1; the interaction is required for recruitment of TTBK2 to the mother centriole.

The protein localises to the cell projection. It is found in the cilium. The protein resides in the cytoplasm. Its subcellular location is the cytoskeleton. It localises to the cilium basal body. The protein localises to the microtubule organizing center. It is found in the centrosome. The protein resides in the centriole. Its subcellular location is the cytosol. It localises to the nucleus. It carries out the reaction L-seryl-[protein] + ATP = O-phospho-L-seryl-[protein] + ADP + H(+). The enzyme catalyses L-threonyl-[protein] + ATP = O-phospho-L-threonyl-[protein] + ADP + H(+). Its function is as follows. Serine/threonine kinase that acts as a key regulator of ciliogenesis: controls the initiation of ciliogenesis by binding to the distal end of the basal body and promoting the removal of CCP110, which caps the mother centriole, leading to the recruitment of IFT proteins, which build the ciliary axoneme. Has some substrate preference for proteins that are already phosphorylated on a Tyr residue at the +2 position relative to the phosphorylation site. Able to phosphorylate tau on serines in vitro. Phosphorylates MPHOSPH9 which promotes its ubiquitination and proteasomal degradation, loss of MPHOSPH9 facilitates the removal of the CP110-CEP97 complex (a negative regulator of ciliogenesis) from the mother centrioles, promoting the initiation of ciliogenesis. Required for recruitment of CPLANE2 and INTU to the mother centriole. The polypeptide is Tau-tubulin kinase 2 (Ttbk2) (Mus musculus (Mouse)).